The following is a 330-amino-acid chain: Cobalamin biosynthesis protein CobD (330 aa).

The next 4 helical transmembrane spans lie at 60–80 (TLVI…PPIV), 153–173 (GIIA…LLGV), 227–247 (LGIV…WKIF), and 308–328 (IVLF…FVLT).

Belongs to the CobD/CbiB family.

The protein resides in the cell membrane. Its pathway is cofactor biosynthesis; adenosylcobalamin biosynthesis. Converts cobyric acid to cobinamide by the addition of aminopropanol on the F carboxylic group. The polypeptide is Cobalamin biosynthesis protein CobD (Desulfotalea psychrophila (strain LSv54 / DSM 12343)).